Reading from the N-terminus, the 37-residue chain is Large ribosomal subunit protein bL36 (37 aa).

This sequence belongs to the bacterial ribosomal protein bL36 family.

This is Large ribosomal subunit protein bL36 from Shewanella baltica (strain OS223).